An 85-amino-acid chain; its full sequence is NADH-ubiquinone oxidoreductase chain 4L (85 aa).

2 consecutive transmembrane segments (helical) span residues 21–41 (LLVT…LLVY) and 51–71 (FIFL…LVSL).

Belongs to the complex I subunit 4L family.

The protein resides in the mitochondrion membrane. It catalyses the reaction a ubiquinone + NADH + 5 H(+)(in) = a ubiquinol + NAD(+) + 4 H(+)(out). Its function is as follows. Core subunit of the mitochondrial membrane respiratory chain NADH dehydrogenase (Complex I) that is believed to belong to the minimal assembly required for catalysis. Complex I functions in the transfer of electrons from NADH to the respiratory chain. The immediate electron acceptor for the enzyme is believed to be ubiquinone. The protein is NADH-ubiquinone oxidoreductase chain 4L (ND4L) of Artemia franciscana (Brine shrimp).